We begin with the raw amino-acid sequence, 136 residues long: Large-conductance mechanosensitive channel (136 aa).

Helical transmembrane passes span 10 to 30 (FAMR…AAFG) and 76 to 96 (GSFI…FSAV).

It belongs to the MscL family. Homopentamer.

The protein resides in the cell inner membrane. Channel that opens in response to stretch forces in the membrane lipid bilayer. May participate in the regulation of osmotic pressure changes within the cell. The polypeptide is Large-conductance mechanosensitive channel (Yersinia enterocolitica serotype O:8 / biotype 1B (strain NCTC 13174 / 8081)).